We begin with the raw amino-acid sequence, 325 residues long: UPF0285 protein MA_3856 (325 aa).

This sequence belongs to the UPF0285 family.

The chain is UPF0285 protein MA_3856 from Methanosarcina acetivorans (strain ATCC 35395 / DSM 2834 / JCM 12185 / C2A).